Consider the following 375-residue polypeptide: Succinyl-diaminopimelate desuccinylase (375 aa).

His66 provides a ligand contact to Zn(2+). Asp68 is a catalytic residue. Residue Asp99 coordinates Zn(2+). The Proton acceptor role is filled by Glu133. Zn(2+) is bound by residues Glu134, Glu162, and His348.

This sequence belongs to the peptidase M20A family. DapE subfamily. In terms of assembly, homodimer. Zn(2+) is required as a cofactor. The cofactor is Co(2+).

It carries out the reaction N-succinyl-(2S,6S)-2,6-diaminopimelate + H2O = (2S,6S)-2,6-diaminopimelate + succinate. Its pathway is amino-acid biosynthesis; L-lysine biosynthesis via DAP pathway; LL-2,6-diaminopimelate from (S)-tetrahydrodipicolinate (succinylase route): step 3/3. Catalyzes the hydrolysis of N-succinyl-L,L-diaminopimelic acid (SDAP), forming succinate and LL-2,6-diaminopimelate (DAP), an intermediate involved in the bacterial biosynthesis of lysine and meso-diaminopimelic acid, an essential component of bacterial cell walls. This chain is Succinyl-diaminopimelate desuccinylase, found in Salmonella dublin (strain CT_02021853).